Reading from the N-terminus, the 411-residue chain is Carbohydrate sulfotransferase 1 (411 aa).

Over 1 to 2 (MQ) the chain is Cytoplasmic. The chain crosses the membrane as a helical; Signal-anchor for type II membrane protein span at residues 3–23 (CSWKAVLLLALASIAIQYTAI). Over 24-411 (RTFTAKSFHT…VEERDFRPFL (388 aa)) the chain is Lumenal. A glycan (N-linked (GlcNAc...) asparagine) is linked at Asn56. A 3'-phosphoadenylyl sulfate-binding site is contributed by 69 to 75 (TRSGSSF). Residues Asn145 and Asn189 are each glycosylated (N-linked (GlcNAc...) asparagine). Residue 234 to 242 (RDPRGILAS) coordinates 3'-phosphoadenylyl sulfate. N-linked (GlcNAc...) asparagine glycosylation is present at Asn334. The short motif at 337–339 (RGD) is the Cell attachment site element.

Belongs to the sulfotransferase 1 family. Gal/GlcNAc/GalNAc subfamily. As to expression, broadly expressed with highest levels in central nervous system. Expressed in cortex (at protein level). Expressed in high endothelial venules in peripheral lymph nodes, mesenteric lymph nodes and Peyer's patches.

It is found in the golgi apparatus membrane. The catalysed reaction is 3'-phosphoadenylyl sulfate + keratan = adenosine 3',5'-bisphosphate + keratan 6'-sulfate.. It functions in the pathway glycan metabolism. Functionally, sulfotransferase that utilizes 3'-phospho-5'-adenylyl sulfate (PAPS) as sulfonate donor to catalyze the transfer of sulfate to position 6 of internal galactose (Gal) residues of keratan. Cooperates with B4GALT4 and B3GNT7 glycosyltransferases and CHST6 sulfotransferase to construct and elongate disulfated disaccharide unit [-&gt;3(6-sulfoGalbeta)1-&gt;4(6-sulfoGlcNAcbeta)1-&gt;] within keratan sulfate polymer. Has a preference for sulfating keratan sulfate, but it also transfers sulfate to the unsulfated polymer. Involved in biosynthesis of phosphacan, a major keratan sulfate proteoglycan in the developing brain. Involved in biosynthesis of 6-sulfoGalbeta-containing O-linked glycans in high endothelial venules of lymph nodes. May act in a synergistic manner with CHST4 to generate sialyl 6',6-disulfo Lewis X motif, a recognition determinant for immune cell receptors implicated in leukocyte trafficking. Catalyzes sulfation of N-acetyllactosamine (LacNAc) oligosaccharides with highest efficiency for sialylated LacNAc structures. This chain is Carbohydrate sulfotransferase 1 (Chst1), found in Mus musculus (Mouse).